A 273-amino-acid polypeptide reads, in one-letter code: Dermonecrotic toxin LdSicTox-alphaIB1bi (273 aa).

Residue histidine 5 is part of the active site. Mg(2+) contacts are provided by glutamate 25 and aspartate 27. Catalysis depends on histidine 41, which acts as the Nucleophile. 2 disulfide bridges follow: cysteine 45-cysteine 51 and cysteine 47-cysteine 190. Aspartate 85 lines the Mg(2+) pocket. Residue asparagine 250 is glycosylated (N-linked (GlcNAc...) asparagine).

Belongs to the arthropod phospholipase D family. Class II subfamily. Requires Mg(2+) as cofactor. In terms of tissue distribution, expressed by the venom gland.

The protein resides in the secreted. The enzyme catalyses an N-(acyl)-sphingosylphosphocholine = an N-(acyl)-sphingosyl-1,3-cyclic phosphate + choline. It catalyses the reaction an N-(acyl)-sphingosylphosphoethanolamine = an N-(acyl)-sphingosyl-1,3-cyclic phosphate + ethanolamine. The catalysed reaction is a 1-acyl-sn-glycero-3-phosphocholine = a 1-acyl-sn-glycero-2,3-cyclic phosphate + choline. It carries out the reaction a 1-acyl-sn-glycero-3-phosphoethanolamine = a 1-acyl-sn-glycero-2,3-cyclic phosphate + ethanolamine. Dermonecrotic toxins cleave the phosphodiester linkage between the phosphate and headgroup of certain phospholipids (sphingolipid and lysolipid substrates), forming an alcohol (often choline) and a cyclic phosphate. This toxin acts on sphingomyelin (SM). It may also act on ceramide phosphoethanolamine (CPE), lysophosphatidylcholine (LPC) and lysophosphatidylethanolamine (LPE), but not on lysophosphatidylserine (LPS), and lysophosphatidylglycerol (LPG). It acts by transphosphatidylation, releasing exclusively cyclic phosphate products as second products. Induces dermonecrosis, hemolysis, increased vascular permeability, edema, inflammatory response, and platelet aggregation. This chain is Dermonecrotic toxin LdSicTox-alphaIB1bi, found in Loxosceles deserta (Desert recluse spider).